The chain runs to 388 residues: Putative [LysW]-aminoadipate semialdehyde/glutamate semialdehyde transaminase (388 aa).

Residues 100–101 (GT) and phenylalanine 127 contribute to the pyridoxal 5'-phosphate site. Residue arginine 130 participates in substrate binding. Residue 211-214 (DEIQ) participates in pyridoxal 5'-phosphate binding. Lysine 240 carries the post-translational modification N6-(pyridoxal phosphate)lysine. Serine 268 contacts substrate. Threonine 269 provides a ligand contact to pyridoxal 5'-phosphate.

The protein belongs to the class-III pyridoxal-phosphate-dependent aminotransferase family. LysJ subfamily. Homodimer. It depends on pyridoxal 5'-phosphate as a cofactor.

It is found in the cytoplasm. The enzyme catalyses [amino-group carrier protein]-C-terminal-gamma-(L-lysyl)-L-glutamate + 2-oxoglutarate = [amino-group carrier protein]-C-terminal-N-(1-carboxy-5-oxopentan-1-yl)-L-glutamine + L-glutamate. It carries out the reaction [amino-group carrier protein]-C-terminal-gamma-(L-ornithyl)-L-glutamate + 2-oxoglutarate = [amino-group carrier protein]-C-terminal-gamma-(L-glutamyl-5-semialdehyde)-L-glutamate + L-glutamate. Its pathway is amino-acid biosynthesis; L-lysine biosynthesis via AAA pathway; L-lysine from L-alpha-aminoadipate (Thermus route): step 4/5. It functions in the pathway amino-acid biosynthesis; L-arginine biosynthesis. In terms of biological role, involved in both the arginine and lysine biosynthetic pathways. The sequence is that of Putative [LysW]-aminoadipate semialdehyde/glutamate semialdehyde transaminase from Aeropyrum pernix (strain ATCC 700893 / DSM 11879 / JCM 9820 / NBRC 100138 / K1).